The chain runs to 93 residues: UPF0358 protein LMHCC_1561 (93 aa).

It belongs to the UPF0358 family.

The sequence is that of UPF0358 protein LMHCC_1561 from Listeria monocytogenes serotype 4a (strain HCC23).